The primary structure comprises 437 residues: UDP-N-acetylmuramate--L-alanine ligase (437 aa).

114-120 (GTHGKTS) is an ATP binding site.

This sequence belongs to the MurCDEF family.

It localises to the cytoplasm. It catalyses the reaction UDP-N-acetyl-alpha-D-muramate + L-alanine + ATP = UDP-N-acetyl-alpha-D-muramoyl-L-alanine + ADP + phosphate + H(+). Its pathway is cell wall biogenesis; peptidoglycan biosynthesis. Cell wall formation. This Lactobacillus gasseri (strain ATCC 33323 / DSM 20243 / BCRC 14619 / CIP 102991 / JCM 1131 / KCTC 3163 / NCIMB 11718 / NCTC 13722 / AM63) protein is UDP-N-acetylmuramate--L-alanine ligase.